Consider the following 331-residue polypeptide: L-lactate dehydrogenase A chain (331 aa).

Residues 29 to 57 (GMVG…MEDK) and Arg-98 each bind NAD(+). Residues Arg-105, Asn-137, and Arg-168 each coordinate substrate. Asn-137 serves as a coordination point for NAD(+). The Proton acceptor role is filled by His-192. Position 247 (Thr-247) interacts with substrate.

This sequence belongs to the LDH/MDH superfamily. LDH family. In terms of assembly, homotetramer.

The protein resides in the cytoplasm. The enzyme catalyses (S)-lactate + NAD(+) = pyruvate + NADH + H(+). The protein operates within fermentation; pyruvate fermentation to lactate; (S)-lactate from pyruvate: step 1/1. Its function is as follows. Interconverts simultaneously and stereospecifically pyruvate and lactate with concomitant interconversion of NADH and NAD(+). The sequence is that of L-lactate dehydrogenase A chain (ldha) from Gobionotothen gibberifrons (Humped rockcod).